Reading from the N-terminus, the 337-residue chain is Pyrophosphate--fructose 6-phosphate 1-phosphotransferase (337 aa).

Residue glycine 10 coordinates diphosphate. A Mg(2+)-binding site is contributed by aspartate 101. Substrate-binding positions include 124–126 (TID), arginine 161, 168–170 (MGR), glutamate 220, arginine 257, and 263–266 (HTIR). Aspartate 126 serves as the catalytic Proton acceptor.

It belongs to the phosphofructokinase type A (PFKA) family. Mixed-substrate PFK group III subfamily. In terms of assembly, homodimer or homotrimer. Requires Mg(2+) as cofactor.

It is found in the cytoplasm. It carries out the reaction beta-D-fructose 6-phosphate + diphosphate = beta-D-fructose 1,6-bisphosphate + phosphate + H(+). It participates in carbohydrate degradation; glycolysis; D-glyceraldehyde 3-phosphate and glycerone phosphate from D-glucose: step 3/4. Non-allosteric. Catalyzes the phosphorylation of D-fructose 6-phosphate, the first committing step of glycolysis. Uses inorganic phosphate (PPi) as phosphoryl donor instead of ATP like common ATP-dependent phosphofructokinases (ATP-PFKs), which renders the reaction reversible, and can thus function both in glycolysis and gluconeogenesis. Consistently, PPi-PFK can replace the enzymes of both the forward (ATP-PFK) and reverse (fructose-bisphosphatase (FBPase)) reactions. The chain is Pyrophosphate--fructose 6-phosphate 1-phosphotransferase from Thermoproteus tenax (strain ATCC 35583 / DSM 2078 / JCM 9277 / NBRC 100435 / Kra 1).